We begin with the raw amino-acid sequence, 97 residues long: Aspartyl/glutamyl-tRNA(Asn/Gln) amidotransferase subunit C (97 aa).

It belongs to the GatC family. In terms of assembly, heterotrimer of A, B and C subunits.

The catalysed reaction is L-glutamyl-tRNA(Gln) + L-glutamine + ATP + H2O = L-glutaminyl-tRNA(Gln) + L-glutamate + ADP + phosphate + H(+). The enzyme catalyses L-aspartyl-tRNA(Asn) + L-glutamine + ATP + H2O = L-asparaginyl-tRNA(Asn) + L-glutamate + ADP + phosphate + 2 H(+). Allows the formation of correctly charged Asn-tRNA(Asn) or Gln-tRNA(Gln) through the transamidation of misacylated Asp-tRNA(Asn) or Glu-tRNA(Gln) in organisms which lack either or both of asparaginyl-tRNA or glutaminyl-tRNA synthetases. The reaction takes place in the presence of glutamine and ATP through an activated phospho-Asp-tRNA(Asn) or phospho-Glu-tRNA(Gln). The chain is Aspartyl/glutamyl-tRNA(Asn/Gln) amidotransferase subunit C from Synechococcus sp. (strain JA-3-3Ab) (Cyanobacteria bacterium Yellowstone A-Prime).